Reading from the N-terminus, the 37-residue chain is Large ribosomal subunit protein bL36 (37 aa).

Belongs to the bacterial ribosomal protein bL36 family.

The protein is Large ribosomal subunit protein bL36 of Helicobacter pylori (strain ATCC 700392 / 26695) (Campylobacter pylori).